A 1112-amino-acid polypeptide reads, in one-letter code: DNA repair protein rad13 (1112 aa).

The segment at 1–95 (MGVSGLWDIL…QTIQKRQARR (95 aa)) is N-domain. The Mg(2+) site is built by Asp30 and Asp77. The region spanning 395-414 (TDDLILQLATQQSLEENKKS) is the UIM domain. The tract at residues 742 to 870 (KRSEKRDADE…LALEILHEFP (129 aa)) is I-domain. Positions 777, 779, 798, 800, and 849 each coordinate Mg(2+). A disordered region spans residues 1056–1112 (KMMASKNSSDSDSDSEDNFLASLTPKTNSSSISIENLPRKTKLSTSLLKKPSKRRRK). Over residues 1079-1089 (TPKTNSSSISI) the composition is skewed to polar residues.

This sequence belongs to the XPG/RAD2 endonuclease family. XPG subfamily. It depends on Mg(2+) as a cofactor.

The protein resides in the nucleus. Functionally, single-stranded DNA endonuclease involved in excision repair of DNA damaged with UV light, bulky adducts, or cross-linking agents. Essential for the incision step of excision-repair. The protein is DNA repair protein rad13 (rad13) of Schizosaccharomyces pombe (strain 972 / ATCC 24843) (Fission yeast).